The primary structure comprises 428 residues: Probable protein phosphatase 2C 12 (428 aa).

Residues 24–293 enclose the PPM-type phosphatase domain; the sequence is KIDNPELIHG…DDTTCIVVDI (270 aa). Residues Asp-69, Gly-70, Asp-245, and Asp-284 each contribute to the Mn(2+) site. Positions 301 to 331 are disordered; the sequence is ASVPPPKKQGKGMLKSMFKRKTSDSSSNIEK.

Belongs to the PP2C family. The cofactor is Mg(2+). It depends on Mn(2+) as a cofactor.

The catalysed reaction is O-phospho-L-seryl-[protein] + H2O = L-seryl-[protein] + phosphate. It catalyses the reaction O-phospho-L-threonyl-[protein] + H2O = L-threonyl-[protein] + phosphate. This is Probable protein phosphatase 2C 12 from Arabidopsis thaliana (Mouse-ear cress).